The chain runs to 423 residues: Dihydroorotase (423 aa).

Positions 60 and 62 each coordinate Zn(2+). Residues 62–64 (HFR) and asparagine 94 contribute to the substrate site. Positions 152, 179, 232, and 305 each coordinate Zn(2+). Aspartate 305 is an active-site residue. Substrate is bound by residues histidine 309 and 323–324 (PG).

This sequence belongs to the metallo-dependent hydrolases superfamily. DHOase family. Class I DHOase subfamily. Requires Zn(2+) as cofactor.

It carries out the reaction (S)-dihydroorotate + H2O = N-carbamoyl-L-aspartate + H(+). It participates in pyrimidine metabolism; UMP biosynthesis via de novo pathway; (S)-dihydroorotate from bicarbonate: step 3/3. Its function is as follows. Catalyzes the reversible cyclization of carbamoyl aspartate to dihydroorotate. The sequence is that of Dihydroorotase from Sulfurihydrogenibium sp. (strain YO3AOP1).